The following is a 545-amino-acid chain: RAN GTPase-activating protein 2 (545 aa).

A WPP region spans residues 1 to 116 (MADILDSRPH…VAARELISED (116 aa)). 9 LRR repeats span residues 213 to 236 (GSIL…AFGA), 241 to 264 (LSSL…AVSE), 269 to 296 (TENL…VVKR), 325 to 348 (CTHM…SLSK), 353 to 380 (FKHM…ALKE), 382 to 405 (ASPI…AIAA), 410 to 433 (KQDL…QIAN), 439 to 462 (HSKL…ALAH), and 467 to 494 (KEAF…IFKK). Residues 496-545 (PELLGALDENDPDGEEDDDDEEDEEDEENEGNGNGELESKLKNLEVNQED) form a disordered region. The segment covering 503–525 (DENDPDGEEDDDDEEDEEDEENE) has biased composition (acidic residues).

The protein belongs to the RNA1 family. In terms of assembly, homodimer. Interacts with WIP1 and WIP2 through its WPP domain. Component of Ran complexes at least composed of WIT1 or WIT2, RANGAP1 or RANGAP2, and WIP1 or WIP2 or WIP3. Interacts with WIT1.

The protein resides in the cytoplasm. It is found in the nucleus membrane. It localises to the cytoskeleton. The protein localises to the spindle. Its subcellular location is the phragmoplast. GTPase activator for the nuclear Ras-related regulatory protein Ran, converting it to the putatively inactive GDP-bound state. In Arabidopsis thaliana (Mouse-ear cress), this protein is RAN GTPase-activating protein 2 (RANGAP2).